We begin with the raw amino-acid sequence, 230 residues long: tRNA (guanine-N(7)-)-methyltransferase (230 aa).

4 residues coordinate S-adenosyl-L-methionine: E61, E86, N113, and D136. The active site involves D136. Substrate-binding positions include K140, D172, and 208–211 (TKYE).

Belongs to the class I-like SAM-binding methyltransferase superfamily. TrmB family.

It carries out the reaction guanosine(46) in tRNA + S-adenosyl-L-methionine = N(7)-methylguanosine(46) in tRNA + S-adenosyl-L-homocysteine. It functions in the pathway tRNA modification; N(7)-methylguanine-tRNA biosynthesis. Catalyzes the formation of N(7)-methylguanine at position 46 (m7G46) in tRNA. The polypeptide is tRNA (guanine-N(7)-)-methyltransferase (Mycobacterium leprae (strain Br4923)).